The chain runs to 457 residues: Acetylcholine receptor subunit alpha (457 aa).

The N-terminal stretch at 1–20 is a signal peptide; it reads MEPWPLLLLFSLCSAGLVLG. Residues 21–232 are Extracellular-facing; it reads SEHETRLVAK…YHFVMQRLPL (212 aa). 2 cysteine pairs are disulfide-bonded: Cys-148/Cys-162 and Cys-212/Cys-213. N-linked (GlcNAc...) asparagine glycosylation occurs at Asn-161. Residues 233-253 form a helical membrane-spanning segment; it reads YFIVNVIIPCLLFSFLTGLVF. The Cytoplasmic portion of the chain corresponds to 254 to 264; sequence YLPTDSGEKMT. A helical transmembrane segment spans residues 265 to 285; sequence LSISVLLSLTVFLLVIVELIP. The Extracellular portion of the chain corresponds to 286 to 296; that stretch reads STSSAVPLIGK. A helical membrane pass occupies residues 297–317; that stretch reads YMLFTMVFVIASIIITVIVIN. The Cytoplasmic segment spans residues 318-427; sequence THHRSPSTHV…EWKYVAMVMD (110 aa). The helical transmembrane segment at 428-448 threads the bilayer; sequence HILLGVFMLVCIIGTLAVFAG. Topologically, residues 449-457 are extracellular; the sequence is RLIELNQQG.

Belongs to the ligand-gated ion channel (TC 1.A.9) family. Acetylcholine receptor (TC 1.A.9.1) subfamily. Alpha-1/CHRNA1 sub-subfamily. In terms of assembly, one of the alpha chains that assemble within the acetylcholine receptor, a pentamer of two alpha chains, a beta, a delta, and a gamma (in immature muscle) or epsilon (in mature muscle) chains. The muscle heteropentamer composed of alpha-1, beta-1, delta, epsilon subunits interacts with the alpha-conotoxin ImII. As to quaternary structure, is able to interact with other subunits of the acetylcholine receptor but is not assembled into functional acetylcholine-gated cation-selective channels. As to expression, isoform 1 is only expressed in skeletal muscle. Isoform 2 is constitutively expressed in skeletal muscle, brain, heart, kidney, liver, lung and thymus.

The protein localises to the postsynaptic cell membrane. Its subcellular location is the cell membrane. It carries out the reaction K(+)(in) = K(+)(out). The enzyme catalyses Na(+)(in) = Na(+)(out). Its function is as follows. Upon acetylcholine binding, the AChR responds by an extensive change in conformation that affects all subunits and leads to opening of an ion-conducting channel across the plasma membrane. Non functional acetylcholine receptor alpha subunit which is not integrated into functional acetylcholine-gated cation-selective channels. The chain is Acetylcholine receptor subunit alpha from Homo sapiens (Human).